The chain runs to 159 residues: ATP synthase subunit b (159 aa).

A helical membrane pass occupies residues 4–24 (VGINGTLIVQLVTFVILVALL).

Belongs to the ATPase B chain family. As to quaternary structure, F-type ATPases have 2 components, F(1) - the catalytic core - and F(0) - the membrane proton channel. F(1) has five subunits: alpha(3), beta(3), gamma(1), delta(1), epsilon(1). F(0) has three main subunits: a(1), b(2) and c(10-14). The alpha and beta chains form an alternating ring which encloses part of the gamma chain. F(1) is attached to F(0) by a central stalk formed by the gamma and epsilon chains, while a peripheral stalk is formed by the delta and b chains.

The protein resides in the cell inner membrane. Functionally, f(1)F(0) ATP synthase produces ATP from ADP in the presence of a proton or sodium gradient. F-type ATPases consist of two structural domains, F(1) containing the extramembraneous catalytic core and F(0) containing the membrane proton channel, linked together by a central stalk and a peripheral stalk. During catalysis, ATP synthesis in the catalytic domain of F(1) is coupled via a rotary mechanism of the central stalk subunits to proton translocation. In terms of biological role, component of the F(0) channel, it forms part of the peripheral stalk, linking F(1) to F(0). The polypeptide is ATP synthase subunit b (Acidithiobacillus ferrooxidans (strain ATCC 23270 / DSM 14882 / CIP 104768 / NCIMB 8455) (Ferrobacillus ferrooxidans (strain ATCC 23270))).